A 1021-amino-acid polypeptide reads, in one-letter code: DNA-directed RNA polymerase 2B, chloroplastic/mitochondrial (1021 aa).

The tract at residues 315-337 (KKQKAEKDKQKEDGEHVTQEQEK) is disordered. Catalysis depends on residues aspartate 722, lysine 797, and aspartate 954.

The protein belongs to the phage and mitochondrial RNA polymerase family.

It is found in the plastid. The protein resides in the chloroplast. The protein localises to the mitochondrion. It catalyses the reaction RNA(n) + a ribonucleoside 5'-triphosphate = RNA(n+1) + diphosphate. Functionally, DNA-dependent RNA polymerase catalyzes the transcription of DNA into RNA using the four ribonucleoside triphosphates as substrates. The sequence is that of DNA-directed RNA polymerase 2B, chloroplastic/mitochondrial (RPOT2-TOM) from Nicotiana tabacum (Common tobacco).